Consider the following 213-residue polypeptide: High frequency lysogenization protein HflD homolog (213 aa).

A coiled-coil region spans residues 79–126; the sequence is QGLNAELTRYTLSLMVLERKLSSAKGALDTLGNRINGLQRQLEHFDLQ.

It belongs to the HflD family.

It localises to the cytoplasm. The protein localises to the cell inner membrane. The chain is High frequency lysogenization protein HflD homolog from Shigella flexneri serotype 5b (strain 8401).